A 44-amino-acid polypeptide reads, in one-letter code: MRDFKTYLSVAPVLSTLSLGFLTGFLIEMNRFFPDALTFPFFSF.

A helical transmembrane segment spans residues 7–27 (YLSVAPVLSTLSLGFLTGFLI).

The protein belongs to the PsaJ family.

It is found in the plastid membrane. Its function is as follows. May help in the organization of the PsaE and PsaF subunits. This Cuscuta gronovii (Common dodder) protein is Photosystem I reaction center subunit IX.